The sequence spans 82 residues: uncharacterized protein (82 aa).

Helical transmembrane passes span 8–28 (LTTA…LPAP) and 50–70 (LYTL…YFVL).

The protein resides in the cell membrane. This is an uncharacterized protein from Escherichia coli (strain K12).